The primary structure comprises 63 residues: U2-agatoxin-Ao1v (63 aa).

Positions 1 to 14 (LLLISAMVGSMIAA) are cleaved as a signal peptide. Positions 15–28 (VPEEESLQLSEDER) are excised as a propeptide. Intrachain disulfides connect Cys-31/Cys-47, Cys-38/Cys-52, and Cys-46/Cys-62.

Belongs to the neurotoxin 01 (U2-agtx) family. In terms of tissue distribution, expressed by the venom gland.

The protein localises to the secreted. In terms of biological role, insect active toxin causing rapid but reversible paralysis in crickets. No activity shown in mammals. Does not show effect on mammalian voltage-gated calcium channels. This chain is U2-agatoxin-Ao1v, found in Agelena orientalis (Funnel-web spider).